The following is a 1516-amino-acid chain: Mediator of RNA polymerase II transcription subunit 14 (1516 aa).

2 disordered regions span residues Leu-22–Ala-98 and Met-1434–Gln-1516. Over residues Ser-34–Ala-47 the composition is skewed to low complexity. A compositionally biased stretch (basic and acidic residues) spans Ser-72–Asp-83. The span at Ser-1463 to Ser-1473 shows a compositional bias: low complexity. A compositionally biased stretch (gly residues) spans Val-1474 to Gly-1483. Low complexity predominate over residues Gln-1502–Gln-1516.

It belongs to the Mediator complex subunit 14 family. In terms of assembly, component of the Mediator complex.

The protein resides in the nucleus. Component of the Mediator complex, a coactivator involved in the regulated transcription of nearly all RNA polymerase II-dependent genes. Mediator functions as a bridge to convey information from gene-specific regulatory proteins to the basal RNA polymerase II transcription machinery. Mediator is recruited to promoters by direct interactions with regulatory proteins and serves as a scaffold for the assembly of a functional preinitiation complex with RNA polymerase II and the general transcription factors. Required for transcription in the embryo and for phosphorylation of the RNA polymerase II C-terminal domain repeat. The polypeptide is Mediator of RNA polymerase II transcription subunit 14 (rgr-1) (Caenorhabditis elegans).